Reading from the N-terminus, the 386-residue chain is MRVLISAVGDTDPFRNFHDGSLIHIARKYRPEKVILIFSEHTAKKQGNIEKALFSIAPNYEPELIIHDPIISDNEVHIFDVMFQRFSDILQEYYTKEDEFILNLSSATPQIKSALFVINRLNGINVKAVQVSSPEHASNENIGHDNDENIDELIEVNKDNKVNFIDRTIEDNAEKFSQALLKKTARDFIEKFDYKAALDILDQLSDFPNLKSVREEIRDVVNCLSKQDVPKGLRHKKLKEEEQKILSAYLTIELQRERGNVSESFIRIKNLTEFILEDYIEKRYPGLIDEYCEDIQKYYLSLFDYSKLLKATKEFKLKRTIAPIIDMNSSRNKVAHSLSPLDSDAVKQLGIAMKTLKTLVREQYHFSQSDFNFYHDLNKILLTKLN.

The interval Met-1–Asn-146 is CARF domain. Positions Asp-147–Asn-386 are HEPN domain.

It belongs to the CRISPR-associated Csm6 family. As to quaternary structure, homodimer. The composite ssRNase active site is formed at the dimer interface.

Non-specific ssRNase activity is stimulated about 1000-fold by cyclic oligoadenylate (cOA), a second messenger produced by Cas10 of the ternary Csm effector complex in the presence of a cognate target RNA. In terms of biological role, CRISPR (clustered regularly interspaced short palindromic repeat) is an adaptive immune system that provides protection against mobile genetic elements (viruses, transposable elements and conjugative plasmids). CRISPR clusters contain spacers, sequences complementary to antecedent mobile elements, and target invading nucleic acids. CRISPR clusters are transcribed and processed into CRISPR RNA (crRNA). The type III-A Csm complex binds crRNA and acts as a crRNA-guided RNase, DNase and cyclic oligoadenylate synthase; binding of target RNA cognate to the crRNA is required for all activities. In a heterologous host this Csm effector complex restricts ssRNA phage MS2, suggesting it may target RNA viruses in vivo. This protein is not part of the Csm complex. Csm functions as a non-specific ssDNase. Base-pairing between crRNA and target RNA to form a ternary Csm complex activates a ssDNase activity; target RNA cleavage suppresses the ssDNase, a temporal control that prevents uncontrolled DNA degradation. Viral RNA transcripts probably tether the Csm complex to the viral genome, recruiting Cas10 ssDNA activity which is able to degrade DNA in the transcription bubble, spatially controlling the DNase activity. Its function is as follows. A single-strand-specific endoribonuclease (ssRNase) that is approximately 1000-fold stimulated by cyclic oligoadenylate (cOA); although several species of cOA are synthesized by this organism only cyclic hexaadenylate (cA6) stimulates the ssRNase activity. Cleaves preferentially within GA or AA dinucleotides, although the presence of cA6 broadens the preference. The chain is CRISPR system endoribonuclease Csm6' from Streptococcus thermophilus.